The sequence spans 536 residues: MAYRQILAIVLFLCVFQFLDCTVSSAVEENGTVFVYGRAAVGTIDEDFICATLDWWPPEKCDYGSCSWDHASILNLDLNNVILQNAIKAFAPLKIRIGGTLQDIVIYETPDSKQPCLPFTKNSSILFGYTQGCLPMRRWDELNAFFRKTGTKVIFGLNALSGRSIKSNGEAIGAWNYTNAESFIRFTAENNYTIDGWELGNELCGSGVGARVGANQYAIDTINLRNIVNRVYKNVSPMPLVIGPGGFFEVDWFTEYLNKAENSLNATTRHIYDLGPGVDEHLIEKILNPSYLDQEAKSFRSLKNIIKNSSTKAVAWVGESGGAYNSGRNLVSNAFVYSFWYLDQLGMASLYDTKTYCRQSLIGGNYGLLNTTNFTPNPDYYSALIWRQLMGRKALFTTFSGTKKIRSYTHCARQSKGITVLLMNLDNTTTVVAKVELNNSFSLRHTKHMKSYKRASSQLFGGPNGVIQREEYHLTAKDGNLHSQTMLLNGNALQVNSMGDLPPIEPIHINSTEPITIAPYSIVFVHMRNVVVPACA.

The N-terminal stretch at 1 to 24 (MAYRQILAIVLFLCVFQFLDCTVS) is a signal peptide. Residues Asn-30, Asn-122, Asn-176, and Asn-191 are each glycosylated (N-linked (GlcNAc...) asparagine). The Proton donor role is filled by Glu-202. N-linked (GlcNAc...) asparagine glycans are attached at residues Asn-265 and Asn-308. The active-site Nucleophile is Glu-319. Residues Asn-370, Asn-427, Asn-438, and Asn-510 are each glycosylated (N-linked (GlcNAc...) asparagine).

It belongs to the glycosyl hydrolase 79 family.

It is found in the lysosome membrane. The protein localises to the secreted. In terms of biological role, endoglycosidase which is a cell surface and extracellular matrix-degrading enzyme. Cleaves heparan sulfate proteoglycans (HSPGs) into heparan sulfate side chains and core proteoglycans. The sequence is that of Heparanase-like protein 3 from Arabidopsis thaliana (Mouse-ear cress).